We begin with the raw amino-acid sequence, 225 residues long: GrpE protein homolog 2, mitochondrial (225 aa).

The transit peptide at Met1–Phe32 directs the protein to the mitochondrion. N6-acetyllysine is present on Lys142.

Belongs to the GrpE family. In terms of assembly, probable component of the PAM complex at least composed of a mitochondrial HSP70 protein, GRPEL1 or GRPEL2, TIMM44, TIMM16/PAM16 and TIMM14/DNAJC19.

Its subcellular location is the mitochondrion matrix. Its function is as follows. Essential component of the PAM complex, a complex required for the translocation of transit peptide-containing proteins from the inner membrane into the mitochondrial matrix in an ATP-dependent manner. Seems to control the nucleotide-dependent binding of mitochondrial HSP70 to substrate proteins. Stimulates ATPase activity of mt-HSP70. May also serve to modulate the interconversion of oligomeric (inactive) and monomeric (active) forms of mt-HSP70. This is GrpE protein homolog 2, mitochondrial (GRPEL2) from Homo sapiens (Human).